The sequence spans 365 residues: Chorismate synthase (365 aa).

Arg-46 contributes to the NADP(+) binding site. FMN contacts are provided by residues 123 to 125 (RSS), 241 to 242 (NG), Gly-281, 296 to 300 (KPTPS), and Arg-322.

It belongs to the chorismate synthase family. In terms of assembly, homotetramer. It depends on FMNH2 as a cofactor.

It catalyses the reaction 5-O-(1-carboxyvinyl)-3-phosphoshikimate = chorismate + phosphate. Its pathway is metabolic intermediate biosynthesis; chorismate biosynthesis; chorismate from D-erythrose 4-phosphate and phosphoenolpyruvate: step 7/7. Functionally, catalyzes the anti-1,4-elimination of the C-3 phosphate and the C-6 proR hydrogen from 5-enolpyruvylshikimate-3-phosphate (EPSP) to yield chorismate, which is the branch point compound that serves as the starting substrate for the three terminal pathways of aromatic amino acid biosynthesis. This reaction introduces a second double bond into the aromatic ring system. The sequence is that of Chorismate synthase from Helicobacter pylori (strain J99 / ATCC 700824) (Campylobacter pylori J99).